Consider the following 145-residue polypeptide: Antiholin-like protein LrgA (145 aa).

4 helical membrane-spanning segments follow: residues 10 to 30 (PAHF…SKII), 33 to 53 (FMPI…VLLC), 72 to 92 (NIGL…GVIS), and 96 to 116 (FLII…TGYV).

The protein belongs to the CidA/LrgA family. LrgA subfamily.

Its subcellular location is the cell membrane. In terms of biological role, inhibits the expression or activity of extracellular murein hydrolases by interacting, possibly with LrgB, with the holin-like proteins CidA and/or CidB. The LrgAB and CidAB proteins may affect the proton motive force of the membrane. May be involved in programmed cell death (PCD), possibly triggering PCD in response to antibiotics and environmental stresses. The protein is Antiholin-like protein LrgA of Staphylococcus aureus (strain Mu3 / ATCC 700698).